A 395-amino-acid polypeptide reads, in one-letter code: Methylmalonyl-CoA decarboxylase subunit beta (395 aa).

9 helical membrane-spanning segments follow: residues 17 to 37, 43 to 63, 103 to 123, 128 to 148, 180 to 200, 230 to 250, 278 to 298, 304 to 324, and 374 to 394; these read LNMG…LAIA, LLLV…AGMM, GIFP…GPLI, SLLL…GAIA, PHLM…VPII, IIFP…AATL, INII…AEAF, LAIL…GVLL, and GPNV…LSLF.

The protein belongs to the GcdB/MmdB/OadB family. In terms of assembly, the methylmalonyl-CoA decarboxylase is composed of four subunits: the carboxyltransferase alpha subunit (MmdA), the tunnel beta subunit (MmdB), the biotin-containing gamma subunit (MmdC) and the delta subunit (MmdD). The N-terminus is blocked.

It localises to the cell membrane. The enzyme catalyses (S)-methylmalonyl-CoA + Na(+)(in) + H(+)(out) = propanoyl-CoA + Na(+)(out) + CO2. In terms of biological role, tunnel subunit of the sodium ion pump methylmalonyl-CoA decarboxylase, which converts the chemical energy of a decarboxylation reaction into an electrochemical gradient of Na(+) ions across the cytoplasmic membrane, thereby creating a sodium ion motive force that is used for ATP synthesis. The beta subunit catalyzes the decarboxylation of the carboxybiotin carrier protein and the coupled export of Na(+) ions. This chain is Methylmalonyl-CoA decarboxylase subunit beta, found in Propionigenium modestum.